The primary structure comprises 306 residues: Recombination-associated protein RdgC (306 aa).

It belongs to the RdgC family.

Its subcellular location is the cytoplasm. The protein resides in the nucleoid. Functionally, may be involved in recombination. This chain is Recombination-associated protein RdgC, found in Pseudomonas entomophila (strain L48).